The sequence spans 404 residues: uncharacterized protein (404 aa).

A run of 12 helical transmembrane segments spans residues Ile-3–Glu-23, Thr-43–Gly-63, Pro-73–Pro-93, Ile-95–Ile-115, Ser-135–Ile-155, Tyr-162–Leu-182, Ile-216–Ile-236, Lys-248–Ile-268, Ile-280–Leu-300, Ile-309–Ile-329, Thr-346–Val-366, and Phe-377–Ile-397.

The protein belongs to the major facilitator superfamily. Bcr/CmlA family.

It is found in the cell inner membrane. This is an uncharacterized protein from Rickettsia bellii (strain RML369-C).